Consider the following 1783-residue polypeptide: Doublecortin domain-containing protein 1 (1783 aa).

The segment at 93–133 (GLQDCSTHQTASDHSHDEISDLDSYKSNSKNNSCSISASKR) is disordered. Over residues 117–131 (YKSNSKNNSCSISAS) the composition is skewed to low complexity. In terms of domain architecture, Doublecortin 1 spans 168–252 (KLQPRVIKVT…FLNPFKKIKD (85 aa)). Positions 702-800 (WLITKTGMIL…HIHHGAWTTA (99 aa)) constitute a Ricin B-type lectin 1 domain. Residues 860-880 (ASAQRWAIKHEGTSKPGQWKH) are disordered. One can recognise a Doublecortin 2 domain in the interval 925–1015 (PICKTTEPYA…ELWINPDLSI (91 aa)). The Ricin B-type lectin 2 domain maps to 1151–1266 (SCSPKHSKLH…GAANQKWHYM (116 aa)).

Interacts with dynein intermediate chain, tubulin, RAB8A, RAB3IP, NUDC, PAFAH1B1 and DCTN1.

Its subcellular location is the midbody. It is found in the midbody ring. The protein localises to the cytoplasm. It localises to the cytoskeleton. The protein resides in the spindle. Microtubule-binding protein which plays an important role in mediating dynein-dependent transport of RAB8A-positive vesicles to the midbody during cytokinesis. This Homo sapiens (Human) protein is Doublecortin domain-containing protein 1.